Reading from the N-terminus, the 338-residue chain is Envelope glycoprotein K (338 aa).

The first 30 residues, 1 to 30 (MLAVRSLQHLTTVIFITAYGLVLAWYIVFG), serve as a signal peptide directing secretion. Topologically, residues 31 to 121 (ASPLHRCIYA…VNCLEALWDT (91 aa)) are extracellular. Residues 31–121 (ASPLHRCIYA…VNCLEALWDT (91 aa)) form an involved in fusion region. Residues asparagine 48 and asparagine 58 are each glycosylated (N-linked (GlcNAc...) asparagine; by host). The helical transmembrane segment at 122 to 140 (QMRLVVVGWFLYLAFVALH) threads the bilayer. The Cytoplasmic segment spans residues 141–212 (QRRCMFGVVS…DPVTFLYHRP (72 aa)). A helical transmembrane segment spans residues 213 to 233 (AIGVIVGCELLLRFVALGLIV). At 234 to 243 (GTALISRGAC) the chain is on the extracellular side. The helical transmembrane segment at 244–264 (AITHPLFLTITTWCFVSIIAL) threads the bilayer. Topologically, residues 265 to 301 (TELYFILRRGSAPKNAEPAAPRGRSKGWSGVCGRCCS) are cytoplasmic. An interaction with UL20 region spans residues 265 to 301 (TELYFILRRGSAPKNAEPAAPRGRSKGWSGVCGRCCS). The helical transmembrane segment at 302–322 (IILSGIAVRLCYIAVVAGVVL) threads the bilayer. Residues 323–338 (VALRYEQEIQRRLFDL) lie on the Extracellular side of the membrane.

This sequence belongs to the alphaherpesvirinae glycoprotein K family. As to quaternary structure, interacts (via UL20 interaction region) with protein UL20 (via N-terminus); this interaction probably plays a role in the coordinate transport of protein UL20 and gK to the trans-Golgi network (TGN), and is required for the cell surface expression of gK. N-glycosylated.

The protein localises to the host cell membrane. It is found in the host endosome membrane. The protein resides in the host Golgi apparatus membrane. Its function is as follows. Glycoprotein that probably modulates membrane fusion events during secondary envelopment of cytoplasmic capsids that bud into specific trans-Golgi network (TGN)-derived membranes. Also plays a role, together with gB, in virus-induced cell-to-cell fusion (syncytia formation). Seems to block fusion of virions with infected-cell membranes. The polypeptide is Envelope glycoprotein K (gK) (Human herpesvirus 2 (strain HG52) (HHV-2)).